The primary structure comprises 597 residues: Vacuolar protein sorting-associated protein 33A (597 aa).

The protein belongs to the STXBP/unc-18/SEC1 family. As to quaternary structure, core component of at least two putative endosomal tethering complexes, the homotypic fusion and vacuole protein sorting (HOPS) complex and the class C core vacuole/endosome tethering (CORVET) complex. Their common core is composed of the class C Vps proteins VPS11, VPS16, VPS18 and VPS33A, which in HOPS further associates with VPS39 and VPS41 and in CORVET with VPS8 and TGFBRAP1. Interacts with RAB5C, UVRAG, STX17, MON1A and MON1B. Associates with adaptor protein complex 3 (AP-3) and clathrin. Interacts with PLEKHM1. In terms of tissue distribution, ubiquitous.

It is found in the cytoplasmic vesicle. The protein localises to the late endosome membrane. The protein resides in the lysosome membrane. It localises to the early endosome. Its subcellular location is the autophagosome. It is found in the clathrin-coated vesicle. Its function is as follows. Plays a role in vesicle-mediated protein trafficking to lysosomal compartments including the endocytic membrane transport and autophagic pathways. Believed to act as a core component of the putative HOPS and CORVET endosomal tethering complexes which are proposed to be involved in the Rab5-to-Rab7 endosome conversion probably implicating MON1A/B, and via binding SNAREs and SNARE complexes to mediate tethering and docking events during SNARE-mediated membrane fusion. The HOPS complex is proposed to be recruited to Rab7 on the late endosomal membrane and to regulate late endocytic, phagocytic and autophagic traffic towards lysosomes. The CORVET complex is proposed to function as a Rab5 effector to mediate early endosome fusion probably in specific endosome subpopulations. Required for fusion of endosomes and autophagosomes with lysosomes; the function is dependent on its association with VPS16 but not VIPAS39. The function in autophagosome-lysosome fusion implicates STX17 but not UVRAG. The protein is Vacuolar protein sorting-associated protein 33A (Vps33a) of Rattus norvegicus (Rat).